A 154-amino-acid chain; its full sequence is Methylglyoxal synthase (154 aa).

In terms of domain architecture, MGS-like spans 6 to 154 (GALPSRKQIA…AYIAERTKKL (149 aa)). Substrate-binding positions include histidine 19, lysine 23, 45-48 (TGTT), and 65-66 (SG). Residue aspartate 71 is the Proton donor/acceptor of the active site. Histidine 98 serves as a coordination point for substrate.

The protein belongs to the methylglyoxal synthase family.

It carries out the reaction dihydroxyacetone phosphate = methylglyoxal + phosphate. Its function is as follows. Catalyzes the formation of methylglyoxal from dihydroxyacetone phosphate. This is Methylglyoxal synthase from Saccharophagus degradans (strain 2-40 / ATCC 43961 / DSM 17024).